Consider the following 399-residue polypeptide: Succinate--CoA ligase [ADP-forming] subunit beta (399 aa).

In terms of domain architecture, ATP-grasp spans 9 to 254 (KELLAKFGVA…ETEEDPAEIE (246 aa)). Residues Lys-46, 53-55 (GRG), Ala-112, and Glu-117 contribute to the ATP site. The Mg(2+) site is built by Asn-209 and Asp-223. Residues Asn-274 and 331-333 (GIM) contribute to the substrate site.

This sequence belongs to the succinate/malate CoA ligase beta subunit family. In terms of assembly, heterotetramer of two alpha and two beta subunits. The cofactor is Mg(2+).

It catalyses the reaction succinate + ATP + CoA = succinyl-CoA + ADP + phosphate. The catalysed reaction is GTP + succinate + CoA = succinyl-CoA + GDP + phosphate. The protein operates within carbohydrate metabolism; tricarboxylic acid cycle; succinate from succinyl-CoA (ligase route): step 1/1. Its function is as follows. Succinyl-CoA synthetase functions in the citric acid cycle (TCA), coupling the hydrolysis of succinyl-CoA to the synthesis of either ATP or GTP and thus represents the only step of substrate-level phosphorylation in the TCA. The beta subunit provides nucleotide specificity of the enzyme and binds the substrate succinate, while the binding sites for coenzyme A and phosphate are found in the alpha subunit. This is Succinate--CoA ligase [ADP-forming] subunit beta from Rhizorhabdus wittichii (strain DSM 6014 / CCUG 31198 / JCM 15750 / NBRC 105917 / EY 4224 / RW1) (Sphingomonas wittichii).